The chain runs to 355 residues: Beta-ketoacyl-[acyl-carrier-protein] synthase III 1 (355 aa).

Active-site residues include C122 and H280. An ACP-binding region spans residues 281-285 (QANER). Residue N311 is part of the active site.

This sequence belongs to the thiolase-like superfamily. FabH family. In terms of assembly, homodimer.

The protein resides in the cytoplasm. It carries out the reaction malonyl-[ACP] + acetyl-CoA + H(+) = 3-oxobutanoyl-[ACP] + CO2 + CoA. The protein operates within lipid metabolism; fatty acid biosynthesis. In terms of biological role, catalyzes the condensation reaction of fatty acid synthesis by the addition to an acyl acceptor of two carbons from malonyl-ACP. Catalyzes the first condensation reaction which initiates fatty acid synthesis and may therefore play a role in governing the total rate of fatty acid production. Possesses both acetoacetyl-ACP synthase and acetyl transacylase activities. Its substrate specificity determines the biosynthesis of branched-chain and/or straight-chain of fatty acids. This is Beta-ketoacyl-[acyl-carrier-protein] synthase III 1 from Streptomyces avermitilis (strain ATCC 31267 / DSM 46492 / JCM 5070 / NBRC 14893 / NCIMB 12804 / NRRL 8165 / MA-4680).